We begin with the raw amino-acid sequence, 41 residues long: Ostricacin-2 (41 aa).

Cystine bridges form between Cys8–Cys36, Cys15–Cys30, and Cys20–Cys37.

It localises to the secreted. Has antibacterial activity against the Gram-positive bacterium S.aureus 1056 MRSA (MIC=1.25 ug/ml) and the Gram-negative bacterium E.coli O157:H7 (MIC=0.96 ug/ml). Has antifungal activity against the yeast C.albicans 3153A (MIC=6.20 ug/ml). This Struthio camelus (Common ostrich) protein is Ostricacin-2.